We begin with the raw amino-acid sequence, 254 residues long: MNRKRRLLASEAFGVKRRRAPGPVRADPLRTRAGSAREAIEELVKLFPRGLFEDALPPIALRSQVYSLVPDRTVADLQLKELQELGEIRIIQLGFDLDAHGIVFTEDYRTRVLKACDGRPCAGAVQKFLASVLPACGDLSFQQDQMTQTYGFRDPEITQLVNAGVLTVRDAGSWWLAVPGAGRFIKCFVKGRQAVLSMVRKAKYRELALSELLGRRAPLAVRLGLAYHVHDLIGAQLVDCVPTTSGTLLRLPDT.

Positions 4-21 (KRRLLASEAFGVKRRRAP) match the Bipartite nuclear localization signal motif. Winged helix domain stretches follow at residues 32-104 (RAGS…GIVF), 120-179 (PCAG…LAVP), and 180-254 (GAGR…LPDT).

This sequence belongs to the STK19 family. As to quaternary structure, monomer in solution. Homodimer; when bound to DNA. Component of a transcription-coupled nucleotide excision repair (TC-NER) complex composed of STK19, ERCC6, ERCC8, DDA1, DDB1, ELOF1 and UVSSA which assembles and interacts with the multiprotein RNA polymerase II complex when it stalls at DNA lesions.

The protein localises to the nucleus. In terms of biological role, DNA-binding protein which is required for efficient transcription-coupled nucleotide excision repair (TC-NER). Acts as part of a TC-NER complex which assembles and interacts with RNA polymerase II (RNAPII) when it stalls at DNA lesions. TC-NER complex subunit UVSSA binds to the GTF2H1/p62 subunit of the TFIIH transcription factor complex, tethering TFIIH to the TC-NER complex. WHR1/STK19 then interacts with the XPD helicase subunit of TFIIH which guides TFIIH to DNA downstream of the stalled RNAPII, ensuring DNA repair. Directly interacts with RNAPII and also binds to downstream DNA. Promotes the timely removal of DNA damage-stalled RNAPII, allowing downstream NER factors to access DNA lesions. Required for monoubiquitination of UVSSA. Regulates repositioning and stabilization of UVSSA within the TC-NER complex. Stimulates ubiquitination of RNAPII complex member RBP1. Also binds to RNA and regulates the expression levels of many mRNAs. This chain is Winged helix repair factor 1, found in Mus musculus (Mouse).